We begin with the raw amino-acid sequence, 111 residues long: Cytochrome c2 (111 aa).

Heme c-binding residues include C14, C17, H18, and M83.

It belongs to the cytochrome c family. Binds 1 heme c group covalently per subunit.

In terms of biological role, cytochrome c2 is found mainly in purple, non-sulfur, photosynthetic bacteria where it functions as the electron donor to the oxidized bacteriochlorophyll in the photophosphorylation pathway. However, it may also have a role in the respiratory chain and is found in some non-photosynthetic bacteria. The polypeptide is Cytochrome c2 (Agrobacterium tumefaciens (strain II Chrys)).